Here is a 1013-residue protein sequence, read N- to C-terminus: Endosome/lysosome-associated apoptosis and autophagy regulator 1 (1013 aa).

Residues Met-1 to Gly-41 form the signal peptide. Residues Thr-42–Lys-910 lie on the Extracellular side of the membrane. Asn-153 is a glycosylation site (N-linked (GlcNAc...) asparagine). 3 cysteine pairs are disulfide-bonded: Cys-278-Cys-295, Cys-308-Cys-330, and Cys-311-Cys-342. Asn-404 and Asn-672 each carry an N-linked (GlcNAc...) asparagine glycan. The MRH domain occupies Asn-656–Leu-858. Disulfide bonds link Cys-658-Cys-704, Cys-714-Cys-739, Cys-808-Cys-844, and Cys-820-Cys-856. Residues Val-911–Trp-931 traverse the membrane as a helical segment. At Lys-932–Leu-1013 the chain is on the cytoplasmic side.

The protein belongs to the ELAPOR family. Interacts with HSPA5; may regulate the function of HSPA5 in apoptosis and cell proliferation. In terms of tissue distribution, expressed in normal endometrium but overexpressed in endometroid tumors.

The protein localises to the cell membrane. It is found in the late endosome membrane. Its subcellular location is the golgi apparatus. The protein resides in the trans-Golgi network membrane. It localises to the lysosome membrane. The protein localises to the endoplasmic reticulum membrane. Its function is as follows. May protect cells from cell death by inducing cytosolic vacuolization and up-regulating the autophagy pathway. May play a role in apoptosis and cell proliferation through its interaction with HSPA5. The sequence is that of Endosome/lysosome-associated apoptosis and autophagy regulator 1 from Homo sapiens (Human).